The chain runs to 572 residues: MAFNFNWSPLMADASFYTRAQDLLTAALNKSPKPPIIVDDIIVTELNLGSIPPELEILEIGDLAEDRFRGIFKMSYSGDAFLTLKTRVQANPLNTYLLTRPSFATPRPLAAATPLTIPLQITLSDFKLSGFVILVFSKQKGITVVFRNDPLESLKVSSTFDSIPFVRDFLQKEIEAQLRILFMDELPAIIHRLSLRLWVPEYRAGEELQTQTESANGEGPGQDPLASPPQDPVDALGNALNESEIESLSLDSSVETHSLFSQKNLLRLAALTDSQRTLSLFTPSIREVVYRAWTSPSDQTDASGGVTSPFSPVLSRTQSQVGSMSSFPDSASMVSNQSRSSTPSHTFSGYGLSLGAGRHSKAHARKRKKRVVDLRRPKTTDDAPSVSDESAFTESTSTPSICSAPMPVLDEQTDDPVTPPLSPDRDLHLPAIPERHGMSISRPALRREIASEMIRDTAESKPSSNPVGQAIQDEDLSATPRAAVRAHGASVLEKEKQATGSSAGSSRQLPSTILPFINDSPTGRVVDQALVERLAGEIARRMRDEKFLASNACGPFWDRHSQEESPPPAYGH.

One can recognise an SMP-LTD domain in the interval 1 to 195 (MAFNFNWSPL…LPAIIHRLSL (195 aa)). 4 disordered regions span residues 208-236 (LQTQ…VDAL), 296-405 (PSDQ…CSAP), 455-518 (RDTA…PFIN), and 551-572 (NACG…AYGH). Polar residues predominate over residues 296-347 (PSDQTDASGGVTSPFSPVLSRTQSQVGSMSSFPDSASMVSNQSRSSTPSHTF). A compositionally biased stretch (basic residues) spans 358 to 370 (RHSKAHARKRKKR). A compositionally biased stretch (basic and acidic residues) spans 371–381 (VVDLRRPKTTD). Composition is skewed to polar residues over residues 387–401 (SDES…TPSI) and 498–511 (ATGS…QLPS).

This sequence belongs to the MDM34 family. Component of the ER-mitochondria encounter structure (ERMES) or MDM complex, composed of mmm1, mdm10, mdm12 and mdm34.

It is found in the mitochondrion outer membrane. Its function is as follows. Component of the ERMES/MDM complex, which serves as a molecular tether to connect the endoplasmic reticulum (ER) and mitochondria. Components of this complex are involved in the control of mitochondrial shape and protein biogenesis, and function in nonvesicular lipid trafficking between the ER and mitochondria. Mdm34 is required for the interaction of the ER-resident membrane protein mmm1 and the outer mitochondrial membrane-resident beta-barrel protein mdm10. The sequence is that of Mitochondrial distribution and morphology protein 34 from Neosartorya fischeri (strain ATCC 1020 / DSM 3700 / CBS 544.65 / FGSC A1164 / JCM 1740 / NRRL 181 / WB 181) (Aspergillus fischerianus).